Reading from the N-terminus, the 257-residue chain is Imidazole glycerol phosphate synthase subunit HisF (257 aa).

Residues D12 and D131 contribute to the active site.

Belongs to the HisA/HisF family. In terms of assembly, heterodimer of HisH and HisF.

The protein localises to the cytoplasm. The catalysed reaction is 5-[(5-phospho-1-deoxy-D-ribulos-1-ylimino)methylamino]-1-(5-phospho-beta-D-ribosyl)imidazole-4-carboxamide + L-glutamine = D-erythro-1-(imidazol-4-yl)glycerol 3-phosphate + 5-amino-1-(5-phospho-beta-D-ribosyl)imidazole-4-carboxamide + L-glutamate + H(+). It participates in amino-acid biosynthesis; L-histidine biosynthesis; L-histidine from 5-phospho-alpha-D-ribose 1-diphosphate: step 5/9. Functionally, IGPS catalyzes the conversion of PRFAR and glutamine to IGP, AICAR and glutamate. The HisF subunit catalyzes the cyclization activity that produces IGP and AICAR from PRFAR using the ammonia provided by the HisH subunit. In Marinomonas sp. (strain MWYL1), this protein is Imidazole glycerol phosphate synthase subunit HisF.